The primary structure comprises 210 residues: Na(+)-translocating NADH-quinone reductase subunit D (210 aa).

Helical transmembrane passes span 14–34 (PIINNNPIALQILGVCSALAV), 42–62 (LVMSLALTVVTAFSNLFISLI), 72–92 (IIVQMTIIASLVIVVDQVLQA), 96–116 (EIAKQLSVFVGLIITNCIVMG), 131–151 (FMDGIGNGLGYGAILLGVGFF), and 178–198 (NGLLLLPPSAFFLIGGLIWVI).

This sequence belongs to the NqrDE/RnfAE family. Composed of six subunits; NqrA, NqrB, NqrC, NqrD, NqrE and NqrF.

It localises to the cell inner membrane. The catalysed reaction is a ubiquinone + n Na(+)(in) + NADH + H(+) = a ubiquinol + n Na(+)(out) + NAD(+). Its function is as follows. NQR complex catalyzes the reduction of ubiquinone-1 to ubiquinol by two successive reactions, coupled with the transport of Na(+) ions from the cytoplasm to the periplasm. NqrA to NqrE are probably involved in the second step, the conversion of ubisemiquinone to ubiquinol. In Shewanella denitrificans (strain OS217 / ATCC BAA-1090 / DSM 15013), this protein is Na(+)-translocating NADH-quinone reductase subunit D.